A 441-amino-acid polypeptide reads, in one-letter code: Glutamate--tRNA ligase 1 (441 aa).

The 'HIGH' region signature appears at 9–19; sequence PSPTGFIHVGN. Residues 239–243 carry the 'KMSKS' region motif; the sequence is ALSKR. Residue K242 participates in ATP binding.

The protein belongs to the class-I aminoacyl-tRNA synthetase family. Glutamate--tRNA ligase type 1 subfamily. In terms of assembly, monomer.

Its subcellular location is the cytoplasm. It carries out the reaction tRNA(Glu) + L-glutamate + ATP = L-glutamyl-tRNA(Glu) + AMP + diphosphate. Catalyzes the attachment of glutamate to tRNA(Glu) in a two-step reaction: glutamate is first activated by ATP to form Glu-AMP and then transferred to the acceptor end of tRNA(Glu). This Cereibacter sphaeroides (strain ATCC 17025 / ATH 2.4.3) (Rhodobacter sphaeroides) protein is Glutamate--tRNA ligase 1.